The sequence spans 292 residues: Hydroxysqualene synthase (292 aa).

This sequence belongs to the phytoene/squalene synthase family. HpnC subfamily.

It carries out the reaction presqualene diphosphate + H2O = hydroxysqualene + diphosphate. The protein operates within secondary metabolite biosynthesis; hopanoid biosynthesis. Functionally, involved in the biosynthesis of the hopanoid precursor squalene (SQ) from farnesyl diphosphate (FPP). Catalyzes the second step, the conversion of presqualene diphosphate (PSPP) to hydroxysqualene (HSQ). The polypeptide is Hydroxysqualene synthase (Sinorhizobium fredii (strain NBRC 101917 / NGR234)).